The chain runs to 433 residues: MVNATPFITTKSEEIFAAAQHLMPGGVSSPVRAFKSVGGQPIVFDRVEGAQIWDVDGNQYIDYVGTWGPAICGHAHPDVISALKQALDKGTSFGAPCAQENVLAEMVIDAVPSIEMVRFVNSGTEACMSVLRLMRAFTGREKIIKFEGCYHGHADMFLVKAGSGVATLGLPDSPGVPSNTTKATLTAPYNDLEAVKALFVENPDSIAGVILEPVVGNAGFILPDAGFLEGLRELTKEYGALLVFDEVMTGFRVSYGGAQARFGITPDLTTLGKVIGGGLPVGAYGGREEIMAMVAPAGPMYQAGTLSGNPLAMTAGIKTLEILQKPGSYEYLDKITKRLVDGLLAAAQDAGHEVCGGSISAMFGIFFAPGPVRNYEDAKLADTNKFARFHRGMLERGIYLAPSQYEAGFPSLAHTQEQIDQTIAVAKEVFATL.

Position 273 is an N6-(pyridoxal phosphate)lysine (Lys-273).

The protein belongs to the class-III pyridoxal-phosphate-dependent aminotransferase family. HemL subfamily. In terms of assembly, homodimer. Pyridoxal 5'-phosphate serves as cofactor.

It is found in the cytoplasm. It catalyses the reaction (S)-4-amino-5-oxopentanoate = 5-aminolevulinate. The protein operates within porphyrin-containing compound metabolism; protoporphyrin-IX biosynthesis; 5-aminolevulinate from L-glutamyl-tRNA(Glu): step 2/2. Its pathway is porphyrin-containing compound metabolism; chlorophyll biosynthesis. In Synechocystis sp. (strain ATCC 27184 / PCC 6803 / Kazusa), this protein is Glutamate-1-semialdehyde 2,1-aminomutase (hemL).